The chain runs to 415 residues: Tyrosine-protein phosphatase non-receptor type 2 (415 aa).

Positions 5–275 constitute a Tyrosine-protein phosphatase domain; that stretch reads IEREFEELDT…RFSYMAIIEG (271 aa). Position 22 is a phosphotyrosine (Tyr22). Ser52 carries the phosphoserine modification. Residue Tyr68 is modified to Phosphotyrosine. Residues Asp182, 216 to 222, and Gln260 contribute to the substrate site; that span reads CSAGIGR. The Phosphocysteine intermediate role is filled by Cys216. Cys216 carries the post-translational modification S-nitrosocysteine. Phosphoserine occurs at positions 293, 298, and 304. Positions 346–415 are endoplasmic reticulum location; sequence ESALRKRIRE…WTLFFQQNAL (70 aa). The tract at residues 376 to 415 is mediates interaction with STX17; sequence ERKRKRWLYWQPILTKMGFMSVILVGAFVGWTLFFQQNAL.

Belongs to the protein-tyrosine phosphatase family. Non-receptor class 1 subfamily. As to quaternary structure, interacts with RMDN3. Isoform 1 interacts with TMED9. Isoform 1 interacts with STX17; dephosphorylates STX17. Interacts with ITGA1 (via cytoplasmic domain); activates the phosphatase activity towards EGFR. Interacts with TRAF2; probably involved in tumor necrosis factor-mediated signaling. Interacts with MET. Interacts with FAM220A and STAT3; interaction with FAM220A promotes interaction of PTPN2 with transcriptional activator STAT3, leading to dephosphorylation of STAT3 by PTPN2 and negative regulation of STAT3 transcriptional activator activity. Post-translationally, specifically phosphorylated in a cell cycle-dependent manner by cyclin-dependent kinases CDK1 and CDK2. Probably activated through phosphorylation by PKR. Ubiquitously expressed. Isoform 2 is probably the major isoform. Isoform 1 is expressed in T-cells and in placenta.

The protein localises to the endoplasmic reticulum. The protein resides in the endoplasmic reticulum-Golgi intermediate compartment. Its subcellular location is the nucleus. It localises to the cytoplasm. It is found in the cell membrane. The enzyme catalyses O-phospho-L-tyrosyl-[protein] + H2O = L-tyrosyl-[protein] + phosphate. Its function is as follows. Non-receptor type tyrosine-specific phosphatase that dephosphorylates receptor protein tyrosine kinases including INSR, EGFR, CSF1R, PDGFR. Also dephosphorylates non-receptor protein tyrosine kinases like JAK1, JAK2, JAK3, Src family kinases, STAT1, STAT3 and STAT6 either in the nucleus or the cytoplasm. Negatively regulates numerous signaling pathways and biological processes like hematopoiesis, inflammatory response, cell proliferation and differentiation, and glucose homeostasis. Plays a multifaceted and important role in the development of the immune system. Functions in T-cell receptor signaling through dephosphorylation of FYN and LCK to control T-cells differentiation and activation. Dephosphorylates CSF1R, negatively regulating its downstream signaling and macrophage differentiation. Negatively regulates cytokine (IL2/interleukin-2 and interferon)-mediated signaling through dephosphorylation of the cytoplasmic kinases JAK1, JAK3 and their substrate STAT1, that propagate signaling downstream of the cytokine receptors. Also regulates the IL6/interleukin-6 and IL4/interleukin-4 cytokine signaling through dephosphorylation of STAT3 and STAT6 respectively. In addition to the immune system, it is involved in anchorage-dependent, negative regulation of EGF-stimulated cell growth. Activated by the integrin ITGA1/ITGB1, it dephosphorylates EGFR and negatively regulates EGF signaling. Dephosphorylates PDGFRB and negatively regulates platelet-derived growth factor receptor-beta signaling pathway and therefore cell proliferation. Negatively regulates tumor necrosis factor-mediated signaling downstream via MAPK through SRC dephosphorylation. May also regulate the hepatocyte growth factor receptor signaling pathway through dephosphorylation of the hepatocyte growth factor receptor MET. Also plays an important role in glucose homeostasis. For instance, negatively regulates the insulin receptor signaling pathway through the dephosphorylation of INSR and control gluconeogenesis and liver glucose production through negative regulation of the IL6 signaling pathways. May also bind DNA. The protein is Tyrosine-protein phosphatase non-receptor type 2 (PTPN2) of Homo sapiens (Human).